Consider the following 193-residue polypeptide: Ribosome maturation factor RimM (193 aa).

In terms of domain architecture, PRC barrel spans 97-172 (DDEFYLTDLV…LILADPPALV (76 aa)). Residues 168–193 (PPALVGDHEGPEEKGLDENEELGDRD) are disordered. Over residues 173 to 193 (GDHEGPEEKGLDENEELGDRD) the composition is skewed to basic and acidic residues.

This sequence belongs to the RimM family. As to quaternary structure, binds ribosomal protein uS19.

The protein resides in the cytoplasm. An accessory protein needed during the final step in the assembly of 30S ribosomal subunit, possibly for assembly of the head region. Essential for efficient processing of 16S rRNA. May be needed both before and after RbfA during the maturation of 16S rRNA. It has affinity for free ribosomal 30S subunits but not for 70S ribosomes. The sequence is that of Ribosome maturation factor RimM from Caulobacter vibrioides (strain ATCC 19089 / CIP 103742 / CB 15) (Caulobacter crescentus).